A 541-amino-acid polypeptide reads, in one-letter code: CTP synthase (541 aa).

The segment at 1–265 (MTRFIFITGG…DAVVCRHFGL (265 aa)) is amidoligase domain. Ser13 is a CTP binding site. Ser13 is a binding site for UTP. 14–19 (SLGKGL) is an ATP binding site. Residue Tyr54 coordinates L-glutamine. Asp71 contributes to the ATP binding site. Positions 71 and 139 each coordinate Mg(2+). CTP-binding positions include 146 to 148 (DIE), 186 to 191 (KTKPTQ), and Lys222. Residues 186–191 (KTKPTQ) and Lys222 contribute to the UTP site. Residues 290–540 (TIAIVGKYIS…IAAAVRQSRL (251 aa)) form the Glutamine amidotransferase type-1 domain. Residue Gly352 coordinates L-glutamine. Cys379 (nucleophile; for glutamine hydrolysis) is an active-site residue. Residues 380-383 (FGMQ), Glu403, and Arg468 contribute to the L-glutamine site. Residues His513 and Glu515 contribute to the active site.

This sequence belongs to the CTP synthase family. In terms of assembly, homotetramer.

The enzyme catalyses UTP + L-glutamine + ATP + H2O = CTP + L-glutamate + ADP + phosphate + 2 H(+). It catalyses the reaction L-glutamine + H2O = L-glutamate + NH4(+). It carries out the reaction UTP + NH4(+) + ATP = CTP + ADP + phosphate + 2 H(+). Its pathway is pyrimidine metabolism; CTP biosynthesis via de novo pathway; CTP from UDP: step 2/2. Allosterically activated by GTP, when glutamine is the substrate; GTP has no effect on the reaction when ammonia is the substrate. The allosteric effector GTP functions by stabilizing the protein conformation that binds the tetrahedral intermediate(s) formed during glutamine hydrolysis. Inhibited by the product CTP, via allosteric rather than competitive inhibition. Functionally, catalyzes the ATP-dependent amination of UTP to CTP with either L-glutamine or ammonia as the source of nitrogen. Regulates intracellular CTP levels through interactions with the four ribonucleotide triphosphates. The protein is CTP synthase of Paramagnetospirillum magneticum (strain ATCC 700264 / AMB-1) (Magnetospirillum magneticum).